Consider the following 462-residue polypeptide: Probable DNA-directed RNA polymerase subunit 343L (462 aa).

This sequence belongs to the RNA polymerase beta' chain family.

It carries out the reaction RNA(n) + a ribonucleoside 5'-triphosphate = RNA(n+1) + diphosphate. Functionally, component of the DNA-dependent RNA polymerase that catalyzes the transcription in the cytoplasm of viral DNA into RNA using the four ribonucleoside triphosphates as substrates. This is Probable DNA-directed RNA polymerase subunit 343L from Acheta domesticus (House cricket).